Reading from the N-terminus, the 318-residue chain is Malate dehydrogenase (318 aa).

Residues 10–15 (GGGQIG) and D34 contribute to the NAD(+) site. The substrate site is built by R83 and R89. NAD(+)-binding positions include N96 and 119-121 (ISN). Residues N121 and R152 each coordinate substrate. H176 serves as the catalytic Proton acceptor.

The protein belongs to the LDH/MDH superfamily. MDH type 3 family.

It carries out the reaction (S)-malate + NAD(+) = oxaloacetate + NADH + H(+). Functionally, catalyzes the reversible oxidation of malate to oxaloacetate. The protein is Malate dehydrogenase of Geotalea uraniireducens (strain Rf4) (Geobacter uraniireducens).